A 578-amino-acid polypeptide reads, in one-letter code: Probable nucleoredoxin 1 (578 aa).

3 consecutive Thioredoxin domains span residues serine 18–arginine 172, serine 178–glutamine 321, and glutamate 325–alanine 485.

It belongs to the nucleoredoxin family.

It catalyses the reaction [protein]-dithiol + NAD(+) = [protein]-disulfide + NADH + H(+). The enzyme catalyses [protein]-dithiol + NADP(+) = [protein]-disulfide + NADPH + H(+). In terms of biological role, probable thiol-disulfide oxidoreductase required for pollen tube growth and pollen function in the pistil. Seems not to be required for in vitro pollen tube growth. May be involved in the generation of lipid signaling molecules in pistil. In Arabidopsis thaliana (Mouse-ear cress), this protein is Probable nucleoredoxin 1.